The following is a 187-amino-acid chain: Elongation factor P (187 aa).

Belongs to the elongation factor P family.

The protein localises to the cytoplasm. Its pathway is protein biosynthesis; polypeptide chain elongation. Its function is as follows. Involved in peptide bond synthesis. Stimulates efficient translation and peptide-bond synthesis on native or reconstituted 70S ribosomes in vitro. Probably functions indirectly by altering the affinity of the ribosome for aminoacyl-tRNA, thus increasing their reactivity as acceptors for peptidyl transferase. In Parasynechococcus marenigrum (strain WH8102), this protein is Elongation factor P.